The sequence spans 467 residues: ATP-dependent rRNA helicase rrp3 (467 aa).

The segment at 1 to 48 (MPGVKKRKVAREAPAPAPAQESDVESSTPEQTQEPEAQEQEQEEGQSK) is disordered. The short motif at 48–76 (KTFKELGIIEQLCEACETMGYKAPTPIQR) is the Q motif element. In terms of domain architecture, Helicase ATP-binding spans 79–250 (IPLALKGRDL…RASLSNPLRV (172 aa)). Residue 92–99 (AETGSGKT) coordinates ATP. Residues 198–201 (DEAD) carry the DEAD box motif. Residues 262–422 (TLLQSYLFIP…EYDCPKDEVM (161 aa)) form the Helicase C-terminal domain. Residues 439–467 (MKDYNEKKGSRGKKFGGKRSRDEMDQEEG) are disordered.

Belongs to the DEAD box helicase family. DDX47/RRP3 subfamily. As to quaternary structure, interacts with the SSU processome.

It localises to the nucleus. It carries out the reaction ATP + H2O = ADP + phosphate + H(+). Functionally, ATP-dependent rRNA helicase required for pre-ribosomal RNA processing. Involved in the maturation of the 35S-pre-rRNA and to its cleavage to mature 18S rRNA. This Aspergillus niger (strain ATCC MYA-4892 / CBS 513.88 / FGSC A1513) protein is ATP-dependent rRNA helicase rrp3.